A 337-amino-acid chain; its full sequence is Holliday junction branch migration complex subunit RuvB (337 aa).

Residues 1–27 are disordered; it reads MIEADRLVHAQPQGTEERDEQIDRAMR. Positions 4–187 are large ATPase domain (RuvB-L); the sequence is ADRLVHAQPQ…FGIPLRLEFY (184 aa). ATP-binding positions include arginine 27, glycine 68, lysine 71, threonine 72, threonine 73, 134–136, arginine 177, tyrosine 187, and arginine 224; that span reads EDY. Threonine 72 provides a ligand contact to Mg(2+). The tract at residues 188 to 258 is small ATPAse domain (RuvB-S); the sequence is NVKDLSSIVT…VAESALDMLD (71 aa). Residues 261-337 are head domain (RuvB-H); sequence VEGFDYMDRK…YQHFNLIQPE (77 aa). 3 residues coordinate DNA: arginine 297, arginine 316, and arginine 321.

It belongs to the RuvB family. In terms of assembly, homohexamer. Forms an RuvA(8)-RuvB(12)-Holliday junction (HJ) complex. HJ DNA is sandwiched between 2 RuvA tetramers; dsDNA enters through RuvA and exits via RuvB. An RuvB hexamer assembles on each DNA strand where it exits the tetramer. Each RuvB hexamer is contacted by two RuvA subunits (via domain III) on 2 adjacent RuvB subunits; this complex drives branch migration. In the full resolvosome a probable DNA-RuvA(4)-RuvB(12)-RuvC(2) complex forms which resolves the HJ.

The protein resides in the cytoplasm. It carries out the reaction ATP + H2O = ADP + phosphate + H(+). In terms of biological role, the RuvA-RuvB-RuvC complex processes Holliday junction (HJ) DNA during genetic recombination and DNA repair, while the RuvA-RuvB complex plays an important role in the rescue of blocked DNA replication forks via replication fork reversal (RFR). RuvA specifically binds to HJ cruciform DNA, conferring on it an open structure. The RuvB hexamer acts as an ATP-dependent pump, pulling dsDNA into and through the RuvAB complex. RuvB forms 2 homohexamers on either side of HJ DNA bound by 1 or 2 RuvA tetramers; 4 subunits per hexamer contact DNA at a time. Coordinated motions by a converter formed by DNA-disengaged RuvB subunits stimulates ATP hydrolysis and nucleotide exchange. Immobilization of the converter enables RuvB to convert the ATP-contained energy into a lever motion, pulling 2 nucleotides of DNA out of the RuvA tetramer per ATP hydrolyzed, thus driving DNA branch migration. The RuvB motors rotate together with the DNA substrate, which together with the progressing nucleotide cycle form the mechanistic basis for DNA recombination by continuous HJ branch migration. Branch migration allows RuvC to scan DNA until it finds its consensus sequence, where it cleaves and resolves cruciform DNA. This Shewanella loihica (strain ATCC BAA-1088 / PV-4) protein is Holliday junction branch migration complex subunit RuvB.